The chain runs to 352 residues: Ketol-acid reductoisomerase (NAD(+)) (352 aa).

Residues 11–199 form the KARI N-terminal Rossmann domain; that stretch reads ENVVTSEEFT…AIGSGYLFPT (189 aa). NAD(+)-binding positions include 38–41 and 100–103; these read YGVQ and DAGQ. His124 is a catalytic residue. Position 153 (Gly153) interacts with NAD(+). Residues 200–347 enclose the KARI C-terminal knotted domain; the sequence is TFEKEVFSDL…AAVRALRPEN (148 aa). Positions 208, 212, 244, and 248 each coordinate Mg(2+). Ser270 is a binding site for substrate.

It belongs to the ketol-acid reductoisomerase family. Mg(2+) is required as a cofactor.

It carries out the reaction (2R)-2,3-dihydroxy-3-methylbutanoate + NAD(+) = (2S)-2-acetolactate + NADH + H(+). The protein operates within amino-acid biosynthesis; L-isoleucine biosynthesis; L-isoleucine from 2-oxobutanoate: step 2/4. Its pathway is amino-acid biosynthesis; L-valine biosynthesis; L-valine from pyruvate: step 2/4. In terms of biological role, involved in the biosynthesis of branched-chain amino acids (BCAA). Catalyzes an alkyl-migration followed by a ketol-acid reduction of (S)-2-acetolactate (S2AL) to yield (R)-2,3-dihydroxy-isovalerate. In the isomerase reaction, S2AL is rearranged via a Mg-dependent methyl migration to produce 3-hydroxy-3-methyl-2-ketobutyrate (HMKB). In the reductase reaction, this 2-ketoacid undergoes a metal-dependent reduction by NADH to yield (R)-2,3-dihydroxy-isovalerate. The polypeptide is Ketol-acid reductoisomerase (NAD(+)) (Desulfosudis oleivorans (strain DSM 6200 / JCM 39069 / Hxd3) (Desulfococcus oleovorans)).